Consider the following 243-residue polypeptide: Carboxy-S-adenosyl-L-methionine synthase (243 aa).

S-adenosyl-L-methionine is bound by residues Tyr-40, 65-67, 90-91, 118-119, Asn-133, and Arg-200; these read GCS, DN, and DI.

This sequence belongs to the class I-like SAM-binding methyltransferase superfamily. Cx-SAM synthase family. As to quaternary structure, homodimer.

The catalysed reaction is prephenate + S-adenosyl-L-methionine = carboxy-S-adenosyl-L-methionine + 3-phenylpyruvate + H2O. Catalyzes the conversion of S-adenosyl-L-methionine (SAM) to carboxy-S-adenosyl-L-methionine (Cx-SAM). This Shewanella woodyi (strain ATCC 51908 / MS32) protein is Carboxy-S-adenosyl-L-methionine synthase.